A 105-amino-acid polypeptide reads, in one-letter code: Circadian clock oscillator protein KaiB (105 aa).

The protein belongs to the KaiB family. In terms of assembly, may undergo a major conformational rearrangment; in the free state forms homooligomers. When bound to KaiC switches to a monomeric thioredoxin-fold (KaiB(fs)). The active oscillator complex is probably KaiC(6):KaiB(6).

Its function is as follows. Component of the KaiBC clock protein complex, which constitutes the main circadian regulator in cyanobacteria; it may modify the ATPase activity of KaiC. In terms of biological role, may be a metamorphic protein which reversibly switches between an inactive tetrameric fold and a rare, thioredoxin-like monomeric fold (KaiB(fs)). KaiB(fs) binds phospho-KaiC, and perhaps clock output effectors. The chain is Circadian clock oscillator protein KaiB from Prochlorococcus marinus (strain MIT 9312).